The chain runs to 369 residues: Nuclear pore complex-interacting protein family member A2 (369 aa).

The disordered stretch occupies residues 325-346; the sequence is KTPPECLLTPLPPSAPPSADDN.

Belongs to the NPIP family.

This is Nuclear pore complex-interacting protein family member A2 (NPIPA2) from Homo sapiens (Human).